The following is a 546-amino-acid chain: Glucose-6-phosphate isomerase (546 aa).

Glutamate 352 (proton donor) is an active-site residue. Residues histidine 383 and lysine 511 contribute to the active site.

Belongs to the GPI family.

The protein resides in the cytoplasm. The catalysed reaction is alpha-D-glucose 6-phosphate = beta-D-fructose 6-phosphate. It functions in the pathway carbohydrate biosynthesis; gluconeogenesis. Its pathway is carbohydrate degradation; glycolysis; D-glyceraldehyde 3-phosphate and glycerone phosphate from D-glucose: step 2/4. Catalyzes the reversible isomerization of glucose-6-phosphate to fructose-6-phosphate. The polypeptide is Glucose-6-phosphate isomerase (Paramagnetospirillum magneticum (strain ATCC 700264 / AMB-1) (Magnetospirillum magneticum)).